A 527-amino-acid polypeptide reads, in one-letter code: Pentatricopeptide repeat-containing protein At5g41170, mitochondrial (527 aa).

A mitochondrion-targeting transit peptide spans 1–35 (MAMRFFQLHRNRLVKGNSGKALSFSRLLDLSFWVR). PPR repeat units lie at residues 36 to 70 (AFCNYREILRNGLHSLQFNEALDLFTHMVESRPLP), 71 to 105 (SIIDFTKLLNVIAKMKKFDVVINLCDHLQIMGVSH), 106 to 140 (DLYTCNLLMNCFCQSSQPYLASSFLGKMMKLGFEP), 141 to 175 (DIVTFTSLINGFCLGNRMEEAMSMVNQMVEMGIKP), 176 to 210 (DVVMYTTIIDSLCKNGHVNYALSLFDQMENYGIRP), 211 to 245 (DVVMYTSLVNGLCNSGRWRDADSLLRGMTKRKIKP), 246 to 280 (DVITFNALIDAFVKEGKFLDAEELYNEMIRMSIAP), 281 to 315 (NIFTYTSLINGFCMEGCVDEARQMFYLMETKGCFP), 316 to 350 (DVVAYTSLINGFCKCKKVDDAMKIFYEMSQKGLTG), 351 to 385 (NTITYTTLIQGFGQVGKPNVAQEVFSHMVSRGVPP), 386 to 420 (NIRTYNVLLHCLCYNGKVKKALMIFEDMQKREMDG), 424 to 458 (NIWTYNVLLHGLCYNGKLEKALMVFEDMRKREMDI), 459 to 493 (GIITYTIIIQGMCKAGKVKNAVNLFCSLPSKGVKP), and 494 to 527 (NVVTYTTMISGLFREGLKHEAHVLFRKMKEDGVS).

The protein belongs to the PPR family. P subfamily.

The protein localises to the mitochondrion. The protein is Pentatricopeptide repeat-containing protein At5g41170, mitochondrial of Arabidopsis thaliana (Mouse-ear cress).